A 428-amino-acid polypeptide reads, in one-letter code: Flotillin-2a (428 aa).

Residues Cys4, Cys19, and Cys20 are each lipidated (S-palmitoyl cysteine).

This sequence belongs to the band 7/mec-2 family. Flotillin subfamily. As to quaternary structure, heterooligomer; Heterooligomerizes with ic complex of flotillins 1 and 2. Palmitoylation may be required for the formation of higher order complexes and for neurite outgrowth in cultured neural stem cells.

It is found in the membrane. The protein resides in the endosome. Its function is as follows. May play a role in axon growth and regeneration. May be involved in epidermal cell adhesion and epidermal structure and function. The protein is Flotillin-2a (flot2a) of Danio rerio (Zebrafish).